We begin with the raw amino-acid sequence, 980 residues long: Glutamate receptor ionotropic, kainate 5 (980 aa).

Residues 1 to 14 (MPAELLLLLIVAFA) form the signal peptide. Residues 15-544 (SPSCQVLSSL…YFSFLDPFSP (530 aa)) are Extracellular-facing. Disulfide bonds link Cys-36–Cys-292, Cys-83–Cys-334, and Cys-165–Cys-170. N-linked (GlcNAc...) asparagine glycosylation is found at Asn-219, Asn-271, Asn-285, Asn-322, Asn-372, Asn-394, Asn-400, Asn-407, Asn-414, and Asn-478. Residues 545 to 565 (AVWLFMLLAYLAVSCVLFLAA) form a helical membrane-spanning segment. Topologically, residues 566–622 (RLSPYEWYNPHPCLRARPHILENQYTLGNSLWFPVGGFMQQGSEIMPRALSTRCVSG) are cytoplasmic. A helical membrane pass occupies residues 623–643 (VWWAFTLIIISSYTANLAAFL). Over 644-803 (TVQRMEVPVE…HRAKGLGMEN (160 aa)) the chain is Extracellular. A glycan (N-linked (GlcNAc...) asparagine) is linked at Asn-735. Residues 804–824 (IGGIFIVLICGLIIAVFVAVM) form a helical membrane-spanning segment. Residues 825–980 (EFIWSTRRSA…AGPRELAEHE (156 aa)) lie on the Cytoplasmic side of the membrane. 2 disordered regions span residues 891–927 (YSAG…PTPC) and 944–980 (ASGA…AEHE). Residues 894 to 903 (GAGGDAGSAH) are compositionally biased toward gly residues.

It belongs to the glutamate-gated ion channel (TC 1.A.10.1) family. GRIK5 subfamily. In terms of assembly, homotetramer. Heterotetramer with GRIK2. Can form functional heteromeric receptors with GRIK1 and GRIK2. Can form functional heteromeric receptors with GRIK3.

The protein localises to the cell membrane. It localises to the postsynaptic cell membrane. It is found in the presynaptic cell membrane. Functionally, ionotropic glutamate receptor that functions as a cation-permeable ligand-gated ion channel, gated by L-glutamate and the glutamatergic agonist kainic acid. Cannot form functional channels on its own and produces channel activity only in heteromeric assembly with GRIK1 and GRIK2 subunits. Can form functional heteromeric receptors with GRIK3. The chain is Glutamate receptor ionotropic, kainate 5 (GRIK5) from Homo sapiens (Human).